A 427-amino-acid chain; its full sequence is 3-deoxy-D-manno-octulosonic acid transferase (427 aa).

A helical; Signal-anchor membrane pass occupies residues 4-24 (FFYTSLLLICQPLILCFIGLL). Glu62 acts as the Proton acceptor in catalysis. CMP-binding positions include 270 to 271 (PR), 311 to 313 (MGE), and 337 to 340 (NPLE).

The protein belongs to the glycosyltransferase group 1 family. Glycosyltransferase 30 subfamily.

The protein resides in the cell inner membrane. The catalysed reaction is lipid IVA (E. coli) + CMP-3-deoxy-beta-D-manno-octulosonate = alpha-Kdo-(2-&gt;6)-lipid IVA (E. coli) + CMP + H(+). It functions in the pathway bacterial outer membrane biogenesis; LPS core biosynthesis. Its function is as follows. Involved in lipopolysaccharide (LPS) biosynthesis. Catalyzes the transfer of a single 3-deoxy-D-manno-octulosonate (Kdo) residue from CMP-Kdo to lipid IV(A), the tetraacyldisaccharide-1,4'-bisphosphate precursor of lipid A. Is strictly monofunctional, i.e. is capable of adding only a single Kdo residue to the acceptor lipid. This chain is 3-deoxy-D-manno-octulosonic acid transferase (waaA), found in Haemophilus influenzae (strain ATCC 51907 / DSM 11121 / KW20 / Rd).